Reading from the N-terminus, the 450-residue chain is MSQKLKVVTIGGGSSYTPELLEGFIKRYHELPVSELWLVDVEGGKPKLDIIFDLCQRMIDNAGVPMKLYKTLDRREALKDADFVTTQLRVGQLPARELDERIPLSHGYLGQETNGAGGLFKGLRTIPVIFDIVKDVEELCPNAWVINFTNPAGMVTEAVYRHTGFKRFIGVCNIPIGMKMFIRDVLMLKDSDDLSIDLFGLNHMVFIKDVLINGKSRFAELLDGVASGQLKASSVKNIFDLPFSEGLIRSLNLLPCSYLLYYFKQKEMLAIEMGEYYKGGARAQVVQKVEKQLFELYKNPELKVKPKELEQRGGAYYSDAACEVINAIYNDKQAEHYVNIPHHGQIDNIPADWAVEMTCKLGRDGATPHPRITHFDDKVMGLIHTIKGFEIAASNAALSGEFNDVLLALNLSPLVHSDRDAELLAREMILAHEKWLPNFADCIAELKKAH.

5–73 contacts NAD(+); it reads LKVVTIGGGS…VPMKLYKTLD (69 aa). Substrate contacts are provided by arginine 96 and asparagine 150. Mn(2+) is bound by residues cysteine 172 and histidine 203. Tyrosine 258 serves as the catalytic Proton acceptor.

Homotetramer. It depends on NAD(+) as a cofactor. The cofactor is Mn(2+). Co(2+) serves as cofactor. Ni(2+) is required as a cofactor.

It carries out the reaction 6-phospho-beta-D-glucosyl-(1-&gt;4)-D-glucose + H2O = D-glucose 6-phosphate + D-glucose. In terms of biological role, hydrolyzes a wide variety of P-beta-glucosides including cellobiose-6P, salicin-6P, arbutin-6P, gentiobiose-6P, methyl-beta-glucoside-6P and p-nitrophenyl-beta-D-glucopyranoside-6P. Is also able to hydrolyze phospho-N,N'-diacetylchitobiose. The chain is 6-phospho-beta-glucosidase (chbF) from Escherichia coli (strain K12).